The primary structure comprises 403 residues: Phosphoglycerate kinase (403 aa).

Substrate-binding positions include 22–24, Arg-37, 60–63, Arg-119, and Arg-156; these read DLN and HLGR. ATP contacts are provided by residues Lys-206, Gly-302, Glu-333, and 359-362; that span reads GGDS.

Belongs to the phosphoglycerate kinase family. As to quaternary structure, monomer.

Its subcellular location is the cytoplasm. It carries out the reaction (2R)-3-phosphoglycerate + ATP = (2R)-3-phospho-glyceroyl phosphate + ADP. It functions in the pathway carbohydrate degradation; glycolysis; pyruvate from D-glyceraldehyde 3-phosphate: step 2/5. The polypeptide is Phosphoglycerate kinase (Streptomyces avermitilis (strain ATCC 31267 / DSM 46492 / JCM 5070 / NBRC 14893 / NCIMB 12804 / NRRL 8165 / MA-4680)).